Reading from the N-terminus, the 257-residue chain is Imidazole glycerol phosphate synthase subunit HisF (257 aa).

Catalysis depends on residues Asp11 and Asp130.

The protein belongs to the HisA/HisF family. In terms of assembly, heterodimer of HisH and HisF.

It is found in the cytoplasm. It catalyses the reaction 5-[(5-phospho-1-deoxy-D-ribulos-1-ylimino)methylamino]-1-(5-phospho-beta-D-ribosyl)imidazole-4-carboxamide + L-glutamine = D-erythro-1-(imidazol-4-yl)glycerol 3-phosphate + 5-amino-1-(5-phospho-beta-D-ribosyl)imidazole-4-carboxamide + L-glutamate + H(+). It participates in amino-acid biosynthesis; L-histidine biosynthesis; L-histidine from 5-phospho-alpha-D-ribose 1-diphosphate: step 5/9. IGPS catalyzes the conversion of PRFAR and glutamine to IGP, AICAR and glutamate. The HisF subunit catalyzes the cyclization activity that produces IGP and AICAR from PRFAR using the ammonia provided by the HisH subunit. The sequence is that of Imidazole glycerol phosphate synthase subunit HisF from Shewanella sp. (strain ANA-3).